Reading from the N-terminus, the 391-residue chain is 5-amino-6-(D-ribitylamino)uracil--L-tyrosine 4-hydroxyphenyl transferase (391 aa).

Positions 55–302 constitute a Radical SAM core domain; sequence VTYVINRNIN…GAVARIYLGN (248 aa). [4Fe-4S] cluster contacts are provided by Cys-69, Cys-73, and Cys-76.

The protein belongs to the radical SAM superfamily. CofH family. In terms of assembly, consists of two subunits, CofG and CofH. [4Fe-4S] cluster is required as a cofactor.

It carries out the reaction 5-amino-6-(D-ribitylamino)uracil + L-tyrosine + S-adenosyl-L-methionine = 5-amino-5-(4-hydroxybenzyl)-6-(D-ribitylimino)-5,6-dihydrouracil + 2-iminoacetate + 5'-deoxyadenosine + L-methionine + H(+). It participates in cofactor biosynthesis; coenzyme F0 biosynthesis. Catalyzes the radical-mediated synthesis of 5-amino-5-(4-hydroxybenzyl)-6-(D-ribitylimino)-5,6-dihydrouracil from 5-amino-6-(D-ribitylamino)uracil and L-tyrosine. This chain is 5-amino-6-(D-ribitylamino)uracil--L-tyrosine 4-hydroxyphenyl transferase, found in Trichormus variabilis (strain ATCC 29413 / PCC 7937) (Anabaena variabilis).